Here is a 157-residue protein sequence, read N- to C-terminus: Prefoldin subunit alpha (157 aa).

The protein belongs to the prefoldin subunit alpha family. Heterohexamer of two alpha and four beta subunits.

It localises to the cytoplasm. In terms of biological role, molecular chaperone capable of stabilizing a range of proteins. Seems to fulfill an ATP-independent, HSP70-like function in archaeal de novo protein folding. This Methanopyrus kandleri (strain AV19 / DSM 6324 / JCM 9639 / NBRC 100938) protein is Prefoldin subunit alpha.